Reading from the N-terminus, the 3106-residue chain is Probable polyketide synthase 29 (3106 aa).

A compositionally biased stretch (polar residues) spans 1–11 (MVQNTDNTRNS). A disordered region spans residues 1-20 (MVQNTDNTRNSKLIRDRNDY). The region spanning 28–461 (SGDIAVIGIG…GSNVCLILSE (434 aa)) is the Ketosynthase family 3 (KS3) domain. Active-site for beta-ketoacyl synthase activity residues include Cys-200, His-339, and His-384. The segment at 661–694 (GVSADIIIGHSLGEVSSPYCSGMIDFQTLCYLTY) is acyl/malonyl transferase. Ser-671 serves as the catalytic For acyl/malonyl transferase activity. An N-terminal hotdog fold region spans residues 961–1082 (PSIHGLGNNT…GNFSLTKHNS (122 aa)). The PKS/mFAS DH domain occupies 961 to 1266 (PSIHGLGNNT…CALVSLDSNP (306 aa)). His-994 serves as the catalytic Proton acceptor; for dehydratase activity. Positions 1099-1266 (NFTSISKQDF…CALVSLDSNP (168 aa)) are C-terminal hotdog fold. The active-site Proton donor; for dehydratase activity is the Asp-1171. Residues 2533–2610 (NNNEIIRSTI…QSIEIILSAH (78 aa)) enclose the Carrier domain. Ser-2570 is modified (O-(pantetheine 4'-phosphoryl)serine). Positions 2609–2656 (AHNNNNKNNNNNNNINNNNKNNNNNNNKNNNNINNNINNNKNNNNNNN) form a coiled coil. The disordered stretch occupies residues 2614-2656 (NKNNNNNNNINNNNKNNNNNNNKNNNNINNNINNNKNNNNNNN).

Pantetheine 4'-phosphate serves as cofactor.

Its function is as follows. Probable polyketide synthase. The polypeptide is Probable polyketide synthase 29 (pks29) (Dictyostelium discoideum (Social amoeba)).